The primary structure comprises 102 residues: Co-chaperonin GroES (102 aa).

It belongs to the GroES chaperonin family. In terms of assembly, heptamer of 7 subunits arranged in a ring. Interacts with the chaperonin GroEL.

It is found in the cytoplasm. Together with the chaperonin GroEL, plays an essential role in assisting protein folding. The GroEL-GroES system forms a nano-cage that allows encapsulation of the non-native substrate proteins and provides a physical environment optimized to promote and accelerate protein folding. GroES binds to the apical surface of the GroEL ring, thereby capping the opening of the GroEL channel. In Chlamydia felis (strain Fe/C-56) (Chlamydophila felis), this protein is Co-chaperonin GroES.